Reading from the N-terminus, the 68-residue chain is TxMMSK-03 (68 aa).

An N-terminal signal peptide occupies residues 1-19 (MSKLGALLIICLLLFPLTA). Residues 20–50 (VPMDGDQPADRPAERMQDDISFEQHPMFDAT) constitute a propeptide that is removed on maturation. 3 disulfides stabilise this stretch: Cys-53/Cys-67, Cys-54/Cys-63, and Cys-59/Cys-66. Position 65 is a 4-hydroxyproline; partial (Pro-65).

Contains 3 disulfide bonds. As to expression, expressed by the venom duct. Both hydroxylated and non-hydroxylated forms are mostly and only present in part 2 (proximal of the venom bulb) of the venom duct, respectively.

It localises to the secreted. This chain is TxMMSK-03, found in Conus textile (Cloth-of-gold cone).